Here is a 218-residue protein sequence, read N- to C-terminus: Synaptonemal complex central element protein 2 (218 aa).

Residues 1–32 are compositionally biased toward basic and acidic residues; it reads MERQGVDVPHVKCKDQEPQPLGESKEHPRWEE. A disordered region spans residues 1-42; that stretch reads MERQGVDVPHVKCKDQEPQPLGESKEHPRWEENCEEEAGGGP. Positions 61 to 87 form a coiled coil; it reads SSLDSSIDILQKRAQELIENINKSRQK. The tract at residues 171 to 218 is disordered; that stretch reads RWGPDHSRGKSPPRPGNSQPPDVFVSSVAETTSQATASEVQTNRDGEC. Over residues 198–211 the composition is skewed to polar residues; that stretch reads VAETTSQATASEVQ.

Belongs to the SYCE family. As to quaternary structure, homodimer. Found in a complex with SYCP1 and SYCE1. Interacts with SYCP1, SYCE1 and SYCE3. Interacts with TEX12.

The protein resides in the nucleus. Its subcellular location is the chromosome. Major component of the transverse central element of synaptonemal complexes (SCS), formed between homologous chromosomes during meiotic prophase. Requires SYCP1 in order to be incorporated into the central element. May have a role in the synaptonemal complex assembly, stabilization and recombination. The sequence is that of Synaptonemal complex central element protein 2 (SYCE2) from Homo sapiens (Human).